The following is a 340-amino-acid chain: Geranylgeranyl pyrophosphate synthase atmG (340 aa).

The span at 19 to 48 (NLDASYPTSSSLSTEPIDTRSSSPQGSAST) shows a compositional bias: polar residues. Positions 19–51 (NLDASYPTSSSLSTEPIDTRSSSPQGSASTPVD) are disordered. Residues K69, R72, and H101 each contribute to the isopentenyl diphosphate site. Residues D108 and D112 each coordinate Mg(2+). R117 contacts dimethylallyl diphosphate. R118 provides a ligand contact to isopentenyl diphosphate. Dimethylallyl diphosphate contacts are provided by K195, T196, and Q229. Position 232 (D232) interacts with Mg(2+). Residues N236, K246, and K256 each contribute to the dimethylallyl diphosphate site.

Belongs to the FPP/GGPP synthase family. Requires Mg(2+) as cofactor.

It carries out the reaction isopentenyl diphosphate + dimethylallyl diphosphate = (2E)-geranyl diphosphate + diphosphate. The catalysed reaction is isopentenyl diphosphate + (2E)-geranyl diphosphate = (2E,6E)-farnesyl diphosphate + diphosphate. It catalyses the reaction isopentenyl diphosphate + (2E,6E)-farnesyl diphosphate = (2E,6E,10E)-geranylgeranyl diphosphate + diphosphate. Its function is as follows. Geranylgeranyl pyrophosphate synthase; part of the ATM1 gene cluster that mediates the biosynthesis of aflatrem, a tremorgenic mycotoxin with acute neurotoxic effects. Synthesis of geranylgeranyl diphosphate (GGPP) by AtmG (a GGPP synthase) precedes condensation of GGPP with indole 3-glycerol phosphate, followed by epoxidation and cyclization by AtmM (a FAD-dependent monooxygenase) and AtmC (a prenyltransferase) to produce paspaline. AtmB is also essential for paspaline production, but its exact role has not been identified yet. AtmP, a cytochrome P450 monooxygenase, subsequently converts paspaline to 13-desoxypaxilline via PC-M6 by removal of the C-30 methyl group and oxidation at C-10. AtmQ, a cytochrome P450 monooxygenase, then catalyzes the oxidation of 13-desoxypaxilline, first at C-7 to produce paspalicine and then at C-13 to form paspalinine. Finally, AtmD prenylates paspalinine to form aflatrem. The chain is Geranylgeranyl pyrophosphate synthase atmG from Aspergillus flavus.